Reading from the N-terminus, the 86-residue chain is Small ribosomal subunit protein uS17 (86 aa).

The protein belongs to the universal ribosomal protein uS17 family. Part of the 30S ribosomal subunit.

In terms of biological role, one of the primary rRNA binding proteins, it binds specifically to the 5'-end of 16S ribosomal RNA. This is Small ribosomal subunit protein uS17 from Methylococcus capsulatus (strain ATCC 33009 / NCIMB 11132 / Bath).